The sequence spans 549 residues: Eukaryotic translation initiation factor 3 subunit D-2 (549 aa).

The disordered stretch occupies residues 107–157 (ARVKGRSGRGPGMLGVAGSMAGGGTTSGSTKYGKGRESRRNQGRRFARNAP). Residues 114–132 (GRGPGMLGVAGSMAGGGTT) are compositionally biased toward gly residues. Residues 288-302 (QFDLLTVNETSLEPP) are RNA gate. Residues 527 to 549 (NSFDSDAEDEENSSEPFANSLDN) form a disordered region. Residues 529–539 (FDSDAEDEENS) show a composition bias toward acidic residues.

The protein belongs to the eIF-3 subunit D family. Component of the eukaryotic translation initiation factor 3 (eIF-3) complex. The eIF-3 complex interacts with pix.

It localises to the cytoplasm. Its function is as follows. mRNA cap-binding component of the eukaryotic translation initiation factor 3 (eIF-3) complex, which is involved in protein synthesis of a specialized repertoire of mRNAs and, together with other initiation factors, stimulates binding of mRNA and methionyl-tRNAi to the 40S ribosome. The eIF-3 complex specifically targets and initiates translation of a subset of mRNAs involved in cell proliferation. In the eIF-3 complex, eif3d specifically recognizes and binds the 7-methylguanosine cap of a subset of mRNAs. The sequence is that of Eukaryotic translation initiation factor 3 subunit D-2 from Drosophila ananassae (Fruit fly).